A 2499-amino-acid chain; its full sequence is Probable polyketide synthase 22 (2499 aa).

The region spanning 11-430 (DNQVAIVGLG…GSNACVLLSE (420 aa)) is the Ketosynthase family 3 (KS3) domain. Residues Cys177, His316, and His354 each act as for beta-ketoacyl synthase activity in the active site. Positions 623–656 (GITPSIIVGHSLGEVASAFCSGMIDLETACFVIY) are acyl/malonyl transferases. Residue Ser633 is the For acyl/malonyl transferase activity of the active site. The interval 922-1044 (APINQLGNKN…SRILMKSLDV (123 aa)) is N-terminal hotdog fold. A PKS/mFAS DH domain is found at 922–1209 (APINQLGNKN…IASTLSTKSE (288 aa)). His956 serves as the catalytic Proton acceptor; for dehydratase activity. The C-terminal hotdog fold stretch occupies residues 1059 to 1209 (NWSTLKREQL…IASTLSTKSE (151 aa)). Asp1121 acts as the Proton donor; for dehydratase activity in catalysis. A Carrier domain is found at 2414–2491 (EKEFSIRQDI…QIINIVTTKV (78 aa)). Ser2451 carries the post-translational modification O-(pantetheine 4'-phosphoryl)serine.

Pantetheine 4'-phosphate serves as cofactor.

Probable polyketide synthase. This Dictyostelium discoideum (Social amoeba) protein is Probable polyketide synthase 22 (pks22).